We begin with the raw amino-acid sequence, 430 residues long: Adenylosuccinate synthetase (430 aa).

GTP contacts are provided by residues 12 to 18 (GDEGKGK) and 40 to 42 (GHT). The active-site Proton acceptor is Asp-13. Mg(2+) is bound by residues Asp-13 and Gly-40. IMP-binding positions include 13 to 16 (DEGK), 38 to 41 (NAGH), Thr-128, Arg-142, Gln-223, Thr-238, and Arg-302. His-41 (proton donor) is an active-site residue. 298-304 (TTTGRPR) serves as a coordination point for substrate. GTP is bound by residues Arg-304, 330 to 332 (SID), and 412 to 414 (SVG).

This sequence belongs to the adenylosuccinate synthetase family. As to quaternary structure, homodimer. The cofactor is Mg(2+).

It localises to the cytoplasm. The enzyme catalyses IMP + L-aspartate + GTP = N(6)-(1,2-dicarboxyethyl)-AMP + GDP + phosphate + 2 H(+). It participates in purine metabolism; AMP biosynthesis via de novo pathway; AMP from IMP: step 1/2. Plays an important role in the de novo pathway of purine nucleotide biosynthesis. Catalyzes the first committed step in the biosynthesis of AMP from IMP. This Exiguobacterium sibiricum (strain DSM 17290 / CCUG 55495 / CIP 109462 / JCM 13490 / 255-15) protein is Adenylosuccinate synthetase.